Reading from the N-terminus, the 394-residue chain is Chalcone synthase 2 (394 aa).

Residue Cys167 is part of the active site.

It belongs to the thiolase-like superfamily. Chalcone/stilbene synthases family.

It carries out the reaction (E)-4-coumaroyl-CoA + 3 malonyl-CoA + 3 H(+) = 2',4,4',6'-tetrahydroxychalcone + 3 CO2 + 4 CoA. Its pathway is secondary metabolite biosynthesis; flavonoid biosynthesis. The primary product of this enzyme is 4,2',4',6'-tetrahydroxychalcone (also termed naringenin-chalcone or chalcone) which can under specific conditions spontaneously isomerize into naringenin. In Secale cereale (Rye), this protein is Chalcone synthase 2 (CHS2).